Consider the following 90-residue polypeptide: Small ribosomal subunit protein bS18A (90 aa).

This sequence belongs to the bacterial ribosomal protein bS18 family. As to quaternary structure, part of the 30S ribosomal subunit. Forms a tight heterodimer with protein bS6.

Its function is as follows. Binds as a heterodimer with protein bS6 to the central domain of the 16S rRNA, where it helps stabilize the platform of the 30S subunit. In Roseiflexus castenholzii (strain DSM 13941 / HLO8), this protein is Small ribosomal subunit protein bS18A.